A 271-amino-acid chain; its full sequence is MDKYAVWGNPIAQSKSPQLHRYFAKQTRQNLDYVAILGDEEKFEQQLSDFFAQGAKGCNITAPFKERAFKLAQQHSKRCLSAESCNTLKKLADGTLFADNTDGAGLVSDLQRLNWLKPNQRILILGAGGATKGVLLPLLQAQQNILITNRTFSRAEDLAHKFNQFGTIEALDLKHIPIQTFDLIINATSTGLQGKTIDINPQILQLASAVYDMQYSKESDTPFIALCKKQGVTKISDGFGMLVGQAAHAFYLWRGVMPEIDPLFSGNEIKI.

Residues 14 to 16 and Thr-61 contribute to the shikimate site; that span reads SKS. Lys-65 (proton acceptor) is an active-site residue. Positions 86 and 102 each coordinate shikimate. NADP(+) is bound by residues 126-130, 149-154, and Met-213; these read GAGGA and NRTFSR. Tyr-215 is a shikimate binding site. Residue Gly-238 participates in NADP(+) binding.

The protein belongs to the shikimate dehydrogenase family. In terms of assembly, homodimer.

It carries out the reaction shikimate + NADP(+) = 3-dehydroshikimate + NADPH + H(+). The protein operates within metabolic intermediate biosynthesis; chorismate biosynthesis; chorismate from D-erythrose 4-phosphate and phosphoenolpyruvate: step 4/7. Involved in the biosynthesis of the chorismate, which leads to the biosynthesis of aromatic amino acids. Catalyzes the reversible NADPH linked reduction of 3-dehydroshikimate (DHSA) to yield shikimate (SA). This is Shikimate dehydrogenase (NADP(+)) from Histophilus somni (strain 2336) (Haemophilus somnus).